Here is a 408-residue protein sequence, read N- to C-terminus: Peptidase T (408 aa).

H78 is a binding site for Zn(2+). D80 is an active-site residue. D140 lines the Zn(2+) pocket. The Proton acceptor role is filled by E173. Zn(2+) is bound by residues E174, D196, and H379.

It belongs to the peptidase M20B family. The cofactor is Zn(2+).

The protein resides in the cytoplasm. The catalysed reaction is Release of the N-terminal residue from a tripeptide.. In terms of biological role, cleaves the N-terminal amino acid of tripeptides. In Escherichia coli O9:H4 (strain HS), this protein is Peptidase T.